Here is a 144-residue protein sequence, read N- to C-terminus: Mediator of RNA polymerase II transcription subunit 21 (144 aa).

The protein belongs to the Mediator complex subunit 21 family. In terms of assembly, component of the Mediator complex, which is composed of MED1, MED4, MED6, MED7, MED8, MED9, MED10, MED11, MED12, MED13, MED13L, MED14, MED15, MED16, MED17, MED18, MED19, MED20, MED21, MED22, MED23, MED24, MED25, MED26, MED27, MED29, MED30, MED31, CCNC, CDK8 and CDC2L6/CDK11. The MED12, MED13, CCNC and CDK8 subunits form a distinct module termed the CDK8 module. Mediator containing the CDK8 module is less active than Mediator lacking this module in supporting transcriptional activation. Individual preparations of the Mediator complex lacking one or more distinct subunits have been variously termed ARC, CRSP, DRIP, PC2, SMCC and TRAP. Interacts with PPARG. Interacts with THRA in a ligand-dependent fashion.

Its subcellular location is the nucleus. In terms of biological role, component of the Mediator complex, a coactivator involved in the regulated transcription of nearly all RNA polymerase II-dependent genes. Mediator functions as a bridge to convey information from gene-specific regulatory proteins to the basal RNA polymerase II transcription machinery. Mediator is recruited to promoters by direct interactions with regulatory proteins and serves as a scaffold for the assembly of a functional preinitiation complex with RNA polymerase II and the general transcription factors. The sequence is that of Mediator of RNA polymerase II transcription subunit 21 (MED21) from Macaca fascicularis (Crab-eating macaque).